The sequence spans 204 residues: Protein GrpE (204 aa).

Composition is skewed to basic and acidic residues over residues 1 to 21 (MEELEKDKIERNEEMSEEVKG) and 36 to 46 (EEKIETEVEQK). A disordered region spans residues 1 to 46 (MEELEKDKIERNEEMSEEVKGEGPPSELEQSEEVVEEKIETEVEQK).

This sequence belongs to the GrpE family. Homodimer.

It localises to the cytoplasm. Its function is as follows. Participates actively in the response to hyperosmotic and heat shock by preventing the aggregation of stress-denatured proteins, in association with DnaK and GrpE. It is the nucleotide exchange factor for DnaK and may function as a thermosensor. Unfolded proteins bind initially to DnaJ; upon interaction with the DnaJ-bound protein, DnaK hydrolyzes its bound ATP, resulting in the formation of a stable complex. GrpE releases ADP from DnaK; ATP binding to DnaK triggers the release of the substrate protein, thus completing the reaction cycle. Several rounds of ATP-dependent interactions between DnaJ, DnaK and GrpE are required for fully efficient folding. In Caldanaerobacter subterraneus subsp. tengcongensis (strain DSM 15242 / JCM 11007 / NBRC 100824 / MB4) (Thermoanaerobacter tengcongensis), this protein is Protein GrpE.